Consider the following 316-residue polypeptide: Short-chain dehydrogenase/reductase family 16C member 6 (316 aa).

40–64 (LITGAASGLGRLLAIKFASLGAILV) is a binding site for NAD(+). S173 is a binding site for substrate. The active-site Proton acceptor is the Y186.

The protein belongs to the short-chain dehydrogenases/reductases (SDR) family.

This is Short-chain dehydrogenase/reductase family 16C member 6 (SDR16C6) from Bos taurus (Bovine).